The following is a 130-amino-acid chain: Small ribosomal subunit protein uS9 (130 aa).

This sequence belongs to the universal ribosomal protein uS9 family.

This is Small ribosomal subunit protein uS9 from Citrobacter koseri (strain ATCC BAA-895 / CDC 4225-83 / SGSC4696).